The following is a 633-amino-acid chain: UvrABC system protein C (633 aa).

The 79-residue stretch at 37–115 folds into the GIY-YIG domain; the sequence is PKPGVYRMFG…IKSLKPRFNI (79 aa). In terms of domain architecture, UVR spans 225–260; it reads NALREDLQTRMAQASEAMDFETAAKLRDRIRAIAAV.

This sequence belongs to the UvrC family. Interacts with UvrB in an incision complex.

The protein resides in the cytoplasm. Functionally, the UvrABC repair system catalyzes the recognition and processing of DNA lesions. UvrC both incises the 5' and 3' sides of the lesion. The N-terminal half is responsible for the 3' incision and the C-terminal half is responsible for the 5' incision. This Maricaulis maris (strain MCS10) (Caulobacter maris) protein is UvrABC system protein C.